A 245-amino-acid polypeptide reads, in one-letter code: Ribonuclease PH (245 aa).

Phosphate contacts are provided by residues Arg-87 and 125–127; that span reads GTR.

The protein belongs to the RNase PH family. As to quaternary structure, homohexameric ring arranged as a trimer of dimers.

It carries out the reaction tRNA(n+1) + phosphate = tRNA(n) + a ribonucleoside 5'-diphosphate. Its function is as follows. Phosphorolytic 3'-5' exoribonuclease that plays an important role in tRNA 3'-end maturation. Removes nucleotide residues following the 3'-CCA terminus of tRNAs; can also add nucleotides to the ends of RNA molecules by using nucleoside diphosphates as substrates, but this may not be physiologically important. Probably plays a role in initiation of 16S rRNA degradation (leading to ribosome degradation) during starvation. The polypeptide is Ribonuclease PH (Streptomyces coelicolor (strain ATCC BAA-471 / A3(2) / M145)).